The primary structure comprises 449 residues: MLSSQTSSIFTVSRLNQTVRLLLEQEMGQVWISGEISNFTQPASGHWYFTLKDDTAQVRCAMFRNSNRRVTFRPQHGQQVLVRANITLYEPRGDYQIIAESMQPAGEGLLQQKYEQLKAKLQAEGLFDQQHKQPLPSPAHCVGVITSKTGAALHDILHVLKRRDPSLPVIIYPTAVQGDDAPGQIVRAIELANARGECDVLIVGRGGGSLEDLWSFNDERVARAIFASRIPVVSAVGHETDVTIADFVADLRAPTPSAAAEIVSRNQQELLRQIQSAQQRLGMAMDYYLANRSRRFTQIFHRLQQQHPQLRLARQQTALERLRQRMGFALEARIKQANQRQQRVSQRLSQQNPQPRIHRAQSRIQQLEYRLTENIRSRLSEQRERFGNAVTHLEAVSPLATLARGYTVSTTTDGKVLKKIKQVKAGDIMTTRLEDGWLESEVKSVTPGT.

This sequence belongs to the XseA family. Heterooligomer composed of large and small subunits.

Its subcellular location is the cytoplasm. The enzyme catalyses Exonucleolytic cleavage in either 5'- to 3'- or 3'- to 5'-direction to yield nucleoside 5'-phosphates.. Bidirectionally degrades single-stranded DNA into large acid-insoluble oligonucleotides, which are then degraded further into small acid-soluble oligonucleotides. The protein is Exodeoxyribonuclease 7 large subunit of Salmonella dublin (strain CT_02021853).